The following is an 80-amino-acid chain: SPbeta prophage-derived uncharacterized HTH-type transcriptional regulator YotL (80 aa).

The HTH cro/C1-type domain maps to 12-67 (LNELMHEYSVSIEDLVECTGLSKQRINDYVGGFKSNMNIGTAMTFADAIGCSIEEL). The H-T-H motif DNA-binding region spans 23–42 (IEDLVECTGLSKQRINDYVG).

The protein is SPbeta prophage-derived uncharacterized HTH-type transcriptional regulator YotL (yotL) of Bacillus subtilis (strain 168).